Reading from the N-terminus, the 520-residue chain is Cytochrome P450 4F2 (520 aa).

Residues 1–4 constitute a propeptide that is removed on maturation; the sequence is MSQL. E328 and C468 together coordinate heme.

Belongs to the cytochrome P450 family. Heme serves as cofactor. As to expression, liver. Also present in kidney: specifically expressed in the S2 and S3 segments of proximal tubules in cortex and outer medulla.

It localises to the microsome membrane. Its subcellular location is the endoplasmic reticulum membrane. It carries out the reaction an organic molecule + reduced [NADPH--hemoprotein reductase] + O2 = an alcohol + oxidized [NADPH--hemoprotein reductase] + H2O + H(+). The enzyme catalyses (5Z,8Z,11Z,14Z)-eicosatetraenoate + reduced [NADPH--hemoprotein reductase] + O2 = 20-hydroxy-(5Z,8Z,11Z,14Z)-eicosatetraenoate + oxidized [NADPH--hemoprotein reductase] + H2O + H(+). It catalyses the reaction (5Z,8Z,11Z)-eicosatrienoate + reduced [NADPH--hemoprotein reductase] + O2 = 20-hydroxy-(5Z,8Z,11Z)-eicosatrienoate + oxidized [NADPH--hemoprotein reductase] + H2O + H(+). The catalysed reaction is (5Z,8Z,11Z,14Z,17Z)-eicosapentaenoate + reduced [NADPH--hemoprotein reductase] + O2 = 20-hydroxy-(5Z,8Z,11Z,14Z,17Z)-eicosapentaenoate + oxidized [NADPH--hemoprotein reductase] + H2O + H(+). It carries out the reaction (4Z,7Z,10Z,13Z,16Z,19Z)-docosahexaenoate + reduced [NADPH--hemoprotein reductase] + O2 = 22-hydroxy-(4Z,7Z,10Z,13Z,16Z,19Z)-docosahexaenoate + oxidized [NADPH--hemoprotein reductase] + H2O + H(+). The enzyme catalyses 8,9-epoxy-(5Z,11Z,14Z)-eicosatrienoate + reduced [NADPH--hemoprotein reductase] + O2 = 20-hydroxy-8,9-epoxy-(5Z,11Z,14Z)-eicosatrienoate + oxidized [NADPH--hemoprotein reductase] + H2O + H(+). It catalyses the reaction (9S,10R)-epoxy-octadecanoate + reduced [NADPH--hemoprotein reductase] + O2 = 18-hydroxy-(9S,10R)-epoxy-octadecanoate + oxidized [NADPH--hemoprotein reductase] + H2O + H(+). The catalysed reaction is (9R,10S)-epoxy-octadecanoate + reduced [NADPH--hemoprotein reductase] + O2 = 18-hydroxy-(9R,10S)-epoxy-octadecanoate + oxidized [NADPH--hemoprotein reductase] + H2O + H(+). It carries out the reaction 12,13-epoxy-(9Z)-octadecenoate + reduced [NADPH--hemoprotein reductase] + O2 = 18-hydroxy-12,13-epoxy-(9Z)-octadecenoate + oxidized [NADPH--hemoprotein reductase] + H2O + H(+). The enzyme catalyses 9,10-epoxy-(12Z)-octadecenoate + reduced [NADPH--hemoprotein reductase] + O2 = 18-hydroxy-9,10-epoxy-(12Z)-octadecenoate + oxidized [NADPH--hemoprotein reductase] + H2O + H(+). It catalyses the reaction 8-hydroxy-(5Z,9E,11Z,14Z)-eicosatetraenoate + reduced [NADPH--hemoprotein reductase] + O2 = 8,20-dihydroxy-(5Z,9E,11Z,14Z)-eicosatetraenoate + oxidized [NADPH--hemoprotein reductase] + H2O + H(+). The catalysed reaction is 12-hydroxy-(5Z,8Z,10E,14Z)-eicosatetraenoate + reduced [NADPH--hemoprotein reductase] + O2 = 12,20-dihydroxy-(5Z,8Z,10E,14Z)-eicosatetraenoate + oxidized [NADPH--hemoprotein reductase] + H2O + H(+). It carries out the reaction 12-hydroxyoctadecanoate + reduced [NADPH--hemoprotein reductase] + O2 = 12,18-dihydroxyoctadecanoate + oxidized [NADPH--hemoprotein reductase] + H2O + H(+). The enzyme catalyses docosanoate + reduced [NADPH--hemoprotein reductase] + O2 = 22-hydroxydocosanoate + oxidized [NADPH--hemoprotein reductase] + H2O + H(+). It catalyses the reaction 22-hydroxydocosanoate + reduced [NADPH--hemoprotein reductase] + O2 = 22-oxodocosanoate + oxidized [NADPH--hemoprotein reductase] + 2 H2O + H(+). The catalysed reaction is 22-oxodocosanoate + reduced [NADPH--hemoprotein reductase] + O2 = docosanedioate + oxidized [NADPH--hemoprotein reductase] + H2O + 2 H(+). It carries out the reaction tetracosanoate + reduced [NADPH--hemoprotein reductase] + O2 = 24-hydroxytetracosanoate + oxidized [NADPH--hemoprotein reductase] + H2O + H(+). The enzyme catalyses hexacosanoate + reduced [NADPH--hemoprotein reductase] + O2 = 26-hydroxyhexacosanoate + oxidized [NADPH--hemoprotein reductase] + H2O + H(+). It catalyses the reaction 26-hydroxyhexacosanoate + reduced [NADPH--hemoprotein reductase] + O2 = 26-oxohexacosanoate + oxidized [NADPH--hemoprotein reductase] + 2 H2O + H(+). The catalysed reaction is 26-oxohexacosanoate + reduced [NADPH--hemoprotein reductase] + O2 = hexacosanedioate + oxidized [NADPH--hemoprotein reductase] + H2O + 2 H(+). It carries out the reaction 3-hydroxyoctadecanoate + reduced [NADPH--hemoprotein reductase] + O2 = 3,18-dihydroxyoctadecanoate + oxidized [NADPH--hemoprotein reductase] + H2O + H(+). The enzyme catalyses 3-hydroxyhexadecanoate + reduced [NADPH--hemoprotein reductase] + O2 = 3,16-dihydroxyhexadecanoate + oxidized [NADPH--hemoprotein reductase] + H2O + H(+). It catalyses the reaction leukotriene B4 + reduced [NADPH--hemoprotein reductase] + O2 = 20-hydroxy-leukotriene B4 + oxidized [NADPH--hemoprotein reductase] + H2O + H(+). The catalysed reaction is 6-trans-leukotriene B4 + reduced [NADPH--hemoprotein reductase] + O2 = 20-hydroxy-6-trans-leukotriene B4 + oxidized [NADPH--hemoprotein reductase] + H2O + H(+). It carries out the reaction lipoxin A4 + reduced [NADPH--hemoprotein reductase] + O2 = 20-hydroxy-lipoxin A4 + oxidized [NADPH--hemoprotein reductase] + H2O + H(+). The enzyme catalyses menaquinone-4 + reduced [NADPH--hemoprotein reductase] + O2 = omega-hydroxymenaquinone-4 + oxidized [NADPH--hemoprotein reductase] + H2O + H(+). It catalyses the reaction phylloquinone + reduced [NADPH--hemoprotein reductase] + O2 = omega-hydroxyphylloquinone + oxidized [NADPH--hemoprotein reductase] + H2O + H(+). The catalysed reaction is (+)-alpha-tocopherol + reduced [NADPH--hemoprotein reductase] + O2 = 13-hydroxy-alpha-tocopherol + oxidized [NADPH--hemoprotein reductase] + H2O + H(+). It carries out the reaction gamma-tocopherol + NADPH + O2 + H(+) = 13-hydroxy-gamma-tocopherol + NADP(+) + H2O. The protein operates within lipid metabolism; arachidonate metabolism. It functions in the pathway lipid metabolism; leukotriene B4 degradation. It participates in cofactor degradation; phylloquinone degradation. Inhibited by dietary sesamin. In terms of biological role, a cytochrome P450 monooxygenase involved in the metabolism of various endogenous substrates, including fatty acids, eicosanoids and vitamins. Mechanistically, uses molecular oxygen inserting one oxygen atom into a substrate, and reducing the second into a water molecule, with two electrons provided by NADPH via cytochrome P450 reductase (CPR; NADPH-ferrihemoprotein reductase). Catalyzes predominantly the oxidation of the terminal carbon (omega-oxidation) of long- and very long-chain fatty acids. Displays high omega-hydroxylase activity toward polyunsaturated fatty acids (PUFAs). Participates in the conversion of arachidonic acid to omega-hydroxyeicosatetraenoic acid (20-HETE), a signaling molecule acting both as vasoconstrictive and natriuretic with overall effect on arterial blood pressure. Plays a role in the oxidative inactivation of eicosanoids, including both pro-inflammatory and anti-inflammatory mediators such as leukotriene B4 (LTB4), lipoxin A4 (LXA4), and several HETEs. Catalyzes omega-hydroxylation of 3-hydroxy fatty acids. Converts monoepoxides of linoleic acid leukotoxin and isoleukotoxin to omega-hydroxylated metabolites. Contributes to the degradation of very long-chain fatty acids (VLCFAs) by catalyzing successive omega-oxidations and chain shortening. Plays an important role in vitamin metabolism by chain shortening. Catalyzes omega-hydroxylation of the phytyl chain of tocopherols (forms of vitamin E), with preference for gamma-tocopherols over alpha-tocopherols, thus promoting retention of alpha-tocopherols in tissues. Omega-hydroxylates and inactivates phylloquinone (vitamin K1), and menaquinone-4 (MK-4, a form of vitamin K2), both acting as cofactors in blood coagulation. In Homo sapiens (Human), this protein is Cytochrome P450 4F2.